The sequence spans 122 residues: Large ribosomal subunit protein uL14 (122 aa).

This sequence belongs to the universal ribosomal protein uL14 family. Part of the 50S ribosomal subunit. Forms a cluster with proteins L3 and L19. In the 70S ribosome, L14 and L19 interact and together make contacts with the 16S rRNA in bridges B5 and B8.

Functionally, binds to 23S rRNA. Forms part of two intersubunit bridges in the 70S ribosome. This chain is Large ribosomal subunit protein uL14, found in Corynebacterium kroppenstedtii (strain DSM 44385 / JCM 11950 / CIP 105744 / CCUG 35717).